The chain runs to 310 residues: Zinc finger protein-like 1 (310 aa).

Residues 1–43 (MGLCKCPKRKVTNLFCFEHRVNVCEHCLVANHAKCIVQSYLQW) form a B box-type; degenerate zinc finger. The Cytoplasmic portion of the chain corresponds to 1–266 (MGLCKCPKRK…RPLTLLQRAG (266 aa)). The RING-type; degenerate zinc finger occupies 53 to 101 (CRLCNIPLASRETTRLVCYDLFHWACLNERAAQLPRNTAPAGYQCPSCN). Positions 145–231 (PEPLNTSDFS…RTPGLHGDCD (87 aa)) are disordered. A compositionally biased stretch (polar residues) spans 148–165 (LNTSDFSDWSSFNASSTP). The segment covering 213–224 (KVYDTRDDDRTP) has biased composition (basic and acidic residues). A helical membrane pass occupies residues 267 to 287 (LLLLLGLLGFLALLALMSRLG). The Lumenal portion of the chain corresponds to 288–310 (RAAADSDPNLDPLMNPHIRVGPS).

It belongs to the ZFPL1 family. Interacts with GOLGA2/GM130. In terms of processing, phosphorylated. In terms of tissue distribution, expressed strongly in the exocrine pancreas.

It localises to the golgi apparatus. Its subcellular location is the cis-Golgi network membrane. In terms of biological role, required for cis-Golgi integrity and efficient ER to Golgi transport. Involved in the maintenance of the integrity of the cis-Golgi, possibly via its interaction with GOLGA2/GM130. The polypeptide is Zinc finger protein-like 1 (ZFPL1) (Homo sapiens (Human)).